A 405-amino-acid chain; its full sequence is Tyrosine-protein phosphatase non-receptor type eak-6 (405 aa).

Residues 30–309 form the Tyrosine-protein phosphatase domain; that stretch reads INQRINIIAD…SFIYDIIIKY (280 aa). The active-site Phosphocysteine intermediate is cysteine 248.

This sequence belongs to the protein-tyrosine phosphatase family. In terms of tissue distribution, expressed in the 2 embryonic head hypodermal cells XXXL/R.

It localises to the cytoplasm. It is found in the cell membrane. It catalyses the reaction O-phospho-L-tyrosyl-[protein] + H2O = L-tyrosyl-[protein] + phosphate. Functionally, putative phosphatase which, together with eak-4 and sdf-9, negatively regulates dauer larva formation downstream of insulin-like receptor daf-2 and in parallel of age-1, pdk-1 and akt-1. This is Tyrosine-protein phosphatase non-receptor type eak-6 from Caenorhabditis elegans.